A 262-amino-acid chain; its full sequence is MWSPIPGTLMRTSSLPAVIEASGNDDWKKRKEAQSLKRLEVKKKRIERRNSLACNTSKEAAGQSPKEMNANTDKLVSSDETIVSANESHSSGKHLVKGLPPKYQATITSEDSSSAMRKKPNSAFKGTAITEEQNSSSSVPSSGEAISSVTAPSLPLLSLVPITATLGSREDQSILGRAGARANGMGDVERRMMQEMPGVFTKGLSNGSRVEGFLYKYSKGEVRIVCICHGSFLTPSEFVEHAGAGKVDNPLRHIVVSATPNL.

The segment at 49 to 70 (RNSLACNTSKEAAGQSPKEMNA) is disordered.

Belongs to the Ninja family.

It is found in the nucleus. This is Ninja-family protein 2 from Zea mays (Maize).